A 97-amino-acid chain; its full sequence is UPF0473 protein Exig_2070 (97 aa).

Belongs to the UPF0473 family.

In Exiguobacterium sibiricum (strain DSM 17290 / CCUG 55495 / CIP 109462 / JCM 13490 / 255-15), this protein is UPF0473 protein Exig_2070.